The primary structure comprises 131 residues: Small ribosomal subunit protein uS11 (131 aa).

Residues 1–15 (MAAQKVKKTRRRKER) are compositionally biased toward basic residues. The interval 1–23 (MAAQKVKKTRRRKERKNVEHGAA) is disordered.

The protein belongs to the universal ribosomal protein uS11 family. In terms of assembly, part of the 30S ribosomal subunit. Interacts with proteins S7 and S18. Binds to IF-3.

Functionally, located on the platform of the 30S subunit, it bridges several disparate RNA helices of the 16S rRNA. Forms part of the Shine-Dalgarno cleft in the 70S ribosome. The chain is Small ribosomal subunit protein uS11 from Clostridium perfringens (strain 13 / Type A).